The sequence spans 152 residues: Zinc finger SWIM domain-containing protein 7 (152 aa).

An SWIM-type zinc finger spans residues 76 to 114 (YTCLASCHYCSCPAFSFSVLRKSDSLLCKHLLAIYLSQL).

The protein belongs to the SWS1 family. As to quaternary structure, interacts with RAD51D and XRCC3; involved in homologous recombination repair. Interacts with SWSAP1; they form a functional complex involved in homologous recombination repair and stabilize each other.

The protein localises to the nucleus. Functionally, involved in early stages of the homologous recombination repair (HRR) pathway of double-stranded DNA breaks arising during DNA replication or induced by DNA-damaging agents. Required for meiotic progression, hence for fertility. The protein is Zinc finger SWIM domain-containing protein 7 (Zswim7) of Mus musculus (Mouse).